Reading from the N-terminus, the 373-residue chain is Enoyl-[acyl-carrier-protein] reductase, mitochondrial (373 aa).

Residues Met1–Asp53 constitute a mitochondrion transit peptide. Lys61 bears the N6-acetyllysine; alternate mark. At Lys61 the chain carries N6-succinyllysine; alternate. The active-site Proton donor is Tyr94. Residues Asn167, Asn193–Val196, and Arg216–Arg218 each bind NADP(+). 2 positions are modified to N6-acetyllysine; alternate: Lys252 and Lys267. An N6-succinyllysine; alternate mark is found at Lys252 and Lys267. NADP(+) is bound by residues Tyr285–Met288 and Phe310–Leu312. An N6-succinyllysine modification is found at Lys316. Lys368 is a binding site for NADP(+).

Belongs to the zinc-containing alcohol dehydrogenase family. Quinone oxidoreductase subfamily. In terms of assembly, homodimer. Isoform 2 interacts with PPARA in the nucleus and increases its activity. In terms of tissue distribution, highly expressed in skeletal and heart muscle. Expressed at lower level in placenta, liver, kidney and pancreas. Weakly or not expressed in lung.

The protein resides in the mitochondrion. It is found in the cytoplasm. The protein localises to the nucleus. It carries out the reaction a 2,3-saturated acyl-[ACP] + NADP(+) = a (2E)-enoyl-[ACP] + NADPH + H(+). It catalyses the reaction (2E)-butenoyl-[ACP] + NADPH + H(+) = butanoyl-[ACP] + NADP(+). The catalysed reaction is (2E)-hexenoyl-[ACP] + NADPH + H(+) = hexanoyl-[ACP] + NADP(+). The enzyme catalyses (2E)-octenoyl-[ACP] + NADPH + H(+) = octanoyl-[ACP] + NADP(+). It carries out the reaction (2E)-decenoyl-[ACP] + NADPH + H(+) = decanoyl-[ACP] + NADP(+). It catalyses the reaction (2E)-dodecenoyl-[ACP] + NADPH + H(+) = dodecanoyl-[ACP] + NADP(+). The catalysed reaction is (2E)-tetradecenoyl-[ACP] + NADPH + H(+) = tetradecanoyl-[ACP] + NADP(+). The enzyme catalyses (2E)-hexadecenoyl-[ACP] + NADPH + H(+) = hexadecanoyl-[ACP] + NADP(+). In terms of biological role, catalyzes the NADPH-dependent reduction of trans-2-enoyl thioesters in mitochondrial fatty acid synthesis (fatty acid synthesis type II). Fatty acid chain elongation in mitochondria uses acyl carrier protein (ACP) as an acyl group carrier, but the enzyme accepts both ACP and CoA thioesters as substrates in vitro. Displays a preference for medium-chain over short- and long-chain substrates. May provide the octanoyl chain used for lipoic acid biosynthesis, regulating protein lipoylation and mitochondrial respiratory activity particularly in Purkinje cells. Involved in iron homeostasis; affecting Fe-S cluster assembly and ceramide metabolism. Required for proper morphology and bioenergetic functions of mitochondria. Required for maintenance of neurons. The chain is Enoyl-[acyl-carrier-protein] reductase, mitochondrial (MECR) from Homo sapiens (Human).